A 59-amino-acid polypeptide reads, in one-letter code: Large ribosomal subunit protein bL35 (59 aa).

Disordered regions lie at residues 1 to 22 (MKVKSAAKKRFKLTKSGQIKRK) and 30 to 49 (APHKTTKQKRHLRKQGTVSA). Over residues 30-43 (APHKTTKQKRHLRK) the composition is skewed to basic residues.

This sequence belongs to the bacterial ribosomal protein bL35 family.

The chain is Large ribosomal subunit protein bL35 (rpmI) from Mycoplasma pneumoniae (strain ATCC 29342 / M129 / Subtype 1) (Mycoplasmoides pneumoniae).